The chain runs to 785 residues: Neutral ceramidase (785 aa).

Residues 1–35 (MEASSWLCYQARGFGSSRVWLWLLLALVLLNCSLV) form the signal peptide. N-linked (GlcNAc...) asparagine glycosylation occurs at N31. The active-site Nucleophile is the S359. N377, N675, and N685 each carry an N-linked (GlcNAc...) asparagine glycan.

Belongs to the neutral ceramidase family. As to expression, expressed in seedlings, with higher levels in roots than in shoots.

The protein localises to the secreted. It is found in the endoplasmic reticulum. The protein resides in the golgi apparatus. It catalyses the reaction an N-acylsphing-4-enine + H2O = sphing-4-enine + a fatty acid. With respect to regulation, enhanced activity in the presence of calcium, magnesium, manganese and zinc ions, but inhibited activity in the presence of iron ion. Its function is as follows. Hydrolyzes the sphingolipid ceramide into sphingosine and free fatty acid. Uses ceramide instead of phytoceramide as substrate. The polypeptide is Neutral ceramidase (Oryza sativa subsp. japonica (Rice)).